The chain runs to 93 residues: Large ribosomal subunit protein uL23cz/uL23cy (93 aa).

This sequence belongs to the universal ribosomal protein uL23 family. Part of the 50S ribosomal subunit.

The protein resides in the plastid. Its subcellular location is the chloroplast. Functionally, binds to 23S rRNA. The chain is Large ribosomal subunit protein uL23cz/uL23cy (rpl23-A) from Eucalyptus globulus subsp. globulus (Tasmanian blue gum).